Reading from the N-terminus, the 494-residue chain is UPF0371 protein str1377 (494 aa).

This sequence belongs to the UPF0371 family.

This chain is UPF0371 protein str1377, found in Streptococcus thermophilus (strain CNRZ 1066).